Here is a 236-residue protein sequence, read N- to C-terminus: Small ribosomal subunit protein uS2c (236 aa).

This sequence belongs to the universal ribosomal protein uS2 family.

The protein localises to the plastid. It localises to the chloroplast. The chain is Small ribosomal subunit protein uS2c (rps2) from Coffea arabica (Arabian coffee).